Here is a 197-residue protein sequence, read N- to C-terminus: GTP cyclohydrolase-2 (197 aa).

50-54 (RIHSE) contributes to the GTP binding site. Residues C55, C66, and C68 each coordinate Zn(2+). GTP-binding positions include Q71, 93-95 (EGR), and T115. Catalysis depends on D127, which acts as the Proton acceptor. R129 acts as the Nucleophile in catalysis. T150 and K155 together coordinate GTP.

Belongs to the GTP cyclohydrolase II family. It depends on Zn(2+) as a cofactor.

It catalyses the reaction GTP + 4 H2O = 2,5-diamino-6-hydroxy-4-(5-phosphoribosylamino)-pyrimidine + formate + 2 phosphate + 3 H(+). It functions in the pathway cofactor biosynthesis; riboflavin biosynthesis; 5-amino-6-(D-ribitylamino)uracil from GTP: step 1/4. In terms of biological role, catalyzes the conversion of GTP to 2,5-diamino-6-ribosylamino-4(3H)-pyrimidinone 5'-phosphate (DARP), formate and pyrophosphate. In Neisseria meningitidis serogroup C (strain 053442), this protein is GTP cyclohydrolase-2.